The primary structure comprises 3411 residues: Genome polyprotein (3411 aa).

The Cytoplasmic segment spans residues 1–104 (MSGRKAQGKT…LSSRKRRSHD (104 aa)). The segment at 38–72 (PGPSRGVQGFIFFFLFNILTGKKITAHLKRLWKML) is hydrophobic; homodimerization of capsid protein C. A propeptide spans 102 to 121 (SHDVLTVQFLILGMLLMTGG) (ER anchor for the capsid protein C, removed in mature form by serine protease NS3). Residues 105–125 (VLTVQFLILGMLLMTGGVTLV) traverse the membrane as a helical segment. The Extracellular portion of the chain corresponds to 126 to 244 (RKNRWLLLNV…GERQLQKIER (119 aa)). Residues asparagine 134 and asparagine 150 are each glycosylated (N-linked (GlcNAc...) asparagine; by host). The chain crosses the membrane as a helical span at residues 245-265 (WLVRNPFFAVTALTIAYLVGS). Topologically, residues 266 to 270 (NMTQR) are cytoplasmic. A helical transmembrane segment spans residues 271 to 285 (VVIALLVLAVGPAYS). Over 286–730 (AHCIGITDRD…TVFGSAFQGL (445 aa)) the chain is Extracellular. 8 disulfide bridges follow: cysteine 288-cysteine 315, cysteine 345-cysteine 401, cysteine 345-cysteine 406, cysteine 359-cysteine 390, cysteine 377-cysteine 401, cysteine 377-cysteine 406, cysteine 467-cysteine 568, and cysteine 585-cysteine 615. Residues 383-396 (DRGWGNGCGLFGKG) are fusion peptide. Residues 731–751 (FGGLNWITKVIMGAVLIWVGI) traverse the membrane as a helical segment. Residues 752–757 (NTRNMT) are Extracellular-facing. A helical membrane pass occupies residues 758–778 (MSMSMILVGVIMMFLSLGVGA). Residues 779 to 1132 (DQGCAINFGK…LVRSWVTAGE (354 aa)) lie on the Extracellular side of the membrane. Cystine bridges form between cysteine 782–cysteine 793, cysteine 833–cysteine 921, cysteine 957–cysteine 1002, cysteine 1058–cysteine 1107, cysteine 1069–cysteine 1091, and cysteine 1090–cysteine 1094. Residues asparagine 908 and asparagine 986 are each glycosylated (N-linked (GlcNAc...) asparagine; by host). The chain crosses the membrane as a helical span at residues 1133–1153 (IHAVPFGLVSMMIAMEVVLRK). Topologically, residues 1154 to 1201 (RQGPKQMLVGGVVLLGAMLVGQVTLLDLLKLTVAVGLHFHEMNNGGDA) are cytoplasmic. Residues 1202–1222 (MYMALIAAFSIRPGLLIGFGL) form a helical membrane-spanning segment. Over 1223–1287 (RTLWSPRERL…ILPLMALLTP (65 aa)) the chain is Lumenal. The helical transmembrane segment at 1288–1308 (VTMAEVRLATMLFCTVVIIGV) threads the bilayer. At 1309–1355 (LHQNSKDTSMQKTIPLVALTLTSYLGLTQPFLGLCAFLATRIFGRRS) the chain is on the cytoplasmic side. The helical transmembrane segment at 1356–1376 (IPVNEALAAAGLVGVLAGLAF) threads the bilayer. The Lumenal portion of the chain corresponds to 1377–1378 (QE). A helical membrane pass occupies residues 1379 to 1399 (MENFLGPIAVGGILMMLVSVA). Over 1400-1456 (GRVDGLELKKLGEVSWEEEAEISGSSARYDVALSEQGEFKLLSEEKVPWDQVVMTSL) the chain is Cytoplasmic. Positions 1407-1446 (LKKLGEVSWEEEAEISGSSARYDVALSEQGEFKLLSEEKV) are interacts with and activates NS3 protease. Positions 1457–1477 (ALVGAAIHPFALLLVLAGWLF) form an intramembrane region, helical. Residues 1478-2157 (HVRGARRSGD…RNALSMMPEA (680 aa)) are Cytoplasmic-facing. A Peptidase S7 domain is found at 1485 to 1665 (SGDVLWDIPT…EVKEEGKEEL (181 aa)). Residues histidine 1537, aspartate 1561, and serine 1622 each act as charge relay system; for serine protease NS3 activity in the active site. The region spanning 1669–1825 (PTMLKKGMTT…HSNGEIEDVQ (157 aa)) is the Helicase ATP-binding domain. An important for RNA-binding region spans residues 1673 to 1676 (KKGM). 1682 to 1689 (FHPGAGKT) contacts ATP. A DEAH box motif is present at residues 1773–1776 (DEAH). In terms of domain architecture, Helicase C-terminal spans 1820–1997 (EIEDVQTDIP…VRGGMVAPLY (178 aa)). Lysine 1877 carries the post-translational modification N6-acetyllysine; by host. The segment at 1942-1961 (AAQRRGRIGRNPNRDGDSYY) is disordered. Residues 2158–2178 (MTIVMLFILAGLLTSGMVIFF) form a helical membrane-spanning segment. Topologically, residues 2179-2186 (MSPKGISR) are lumenal. Positions 2187 to 2207 (MSMAMGTMAGCGYLMFLGGVK) form an intramembrane region, helical. Over 2208–2209 (PT) the chain is Lumenal. The chain crosses the membrane as a helical span at residues 2210–2230 (HISYIMLIFFVLMVVVIPEPG). Residues 2231-2241 (QQRSIQDNQVA) lie on the Cytoplasmic side of the membrane. A helical transmembrane segment spans residues 2242–2262 (YLIIGILTLVSVVAANELGML). Residues 2263–2293 (EKTKEDLFGKKNLIPSSASPWSWPDLDLKPG) lie on the Lumenal side of the membrane. The segment at residues 2294–2314 (AAWTVYVGIVTMLSPMLHHWI) is an intramembrane region (helical). The Lumenal segment spans residues 2315–2360 (KVEYGNLSLSGIAQSASVLSFMDKGIPFMKMNISVIILLVSGWNSI). Residues 2361–2380 (TVMPLLCGIGCAMLHWSLIL) form a helical membrane-spanning segment. Residues 2381-2421 (PGIKAQQSKLAQRRVFHGVAKNPVVDGNPTVDIEEAPEMPA) are Cytoplasmic-facing. Residues 2422–2442 (LYEKKLALYLLLALSLASVAM) form a helical membrane-spanning segment. The Lumenal portion of the chain corresponds to 2443–2445 (CRT). Residues 2446–2466 (PFSLAEGIVLASAALGPLIEG) traverse the membrane as a helical segment. At 2467-3411 (NTSLLWNGPM…DADLQPGELI (945 aa)) the chain is on the cytoplasmic side. The mRNA cap 0-1 NS5-type MT domain occupies 2507-2771 (GSANGKTLGE…DVILPIGTRS (265 aa)). An S-adenosyl-L-methionine-binding site is contributed by serine 2562. Position 2562 is a phosphoserine (serine 2562). The active-site For 2'-O-MTase activity is lysine 2567. S-adenosyl-L-methionine-binding residues include glycine 2592, tryptophan 2593, threonine 2610, leucine 2611, aspartate 2637, and isoleucine 2638. Aspartate 2652 acts as the For 2'-O-MTase activity in catalysis. Isoleucine 2653 contacts S-adenosyl-L-methionine. Residues lysine 2688 and glutamate 2724 each act as for 2'-O-MTase activity in the active site. Tyrosine 2726 is an S-adenosyl-L-methionine binding site. Positions 2878 to 2911 (RKIMKVVNRWLFRHLAREKNPRLCTKEEFIAKVR) match the Nuclear localization signal motif. Zn(2+)-binding residues include glutamate 2945, histidine 2949, cysteine 2954, and cysteine 2957. Residues 3035 to 3187 (GGFYADDTAG…RPIDDRFGLA (153 aa)) form the RdRp catalytic domain. Residues histidine 3222, cysteine 3238, and cysteine 3357 each contribute to the Zn(2+) site.

In the N-terminal section; belongs to the class I-like SAM-binding methyltransferase superfamily. mRNA cap 0-1 NS5-type methyltransferase family. In terms of assembly, homodimer. Interacts (via N-terminus) with host EXOC1 (via C-terminus); this interaction results in EXOC1 degradation through the proteasome degradation pathway. As to quaternary structure, forms heterodimers with envelope protein E in the endoplasmic reticulum and Golgi. Homodimer; in the endoplasmic reticulum and Golgi. Interacts with protein prM. Interacts with non-structural protein 1. In terms of assembly, homodimer; Homohexamer when secreted. Interacts with envelope protein E. NS1 interacts with NS4B. Interacts with host complement protein CFH; this interaction leads to the degradation of C3. As to quaternary structure, interacts (via N-terminus) with serine protease NS3. Forms a heterodimer with serine protease NS3. May form homooligomers. In terms of assembly, forms a heterodimer with NS2B. Interacts with non-structural protein 2A (via N-terminus). Interacts with NS4B. Interacts with unphosphorylated RNA-directed RNA polymerase NS5; this interaction stimulates RNA-directed RNA polymerase NS5 guanylyltransferase activity. NS3 interacts with host PDCD6IP; this interaction contributes to virion release. As to quaternary structure, interacts with serine protease NS3. Homodimer. Interacts with host STAT2; this interaction prevents the establishment of cellular antiviral state. Interacts with serine protease NS3. Interacts with host TRIM23; this interaction leads to NS5 ubiquitination. In terms of processing, specific enzymatic cleavages in vivo yield mature proteins. The nascent capsid protein C contains a C-terminal hydrophobic domain that act as a signal sequence for translocation of prM into the lumen of the ER. Mature capsid protein C is cleaved at a site upstream of this hydrophobic domain by NS3. prM is cleaved in post-Golgi vesicles by a host furin, releasing the mature small envelope protein M, and peptide pr. Non-structural protein 2A-alpha, a C-terminally truncated form of non-structural protein 2A, results from partial cleavage by NS3. Specific enzymatic cleavages in vivo yield mature proteins peptide 2K acts as a signal sequence and is removed from the N-terminus of NS4B by the host signal peptidase in the ER lumen. Signal cleavage at the 2K-4B site requires a prior NS3 protease-mediated cleavage at the 4A-2K site. Post-translationally, cleaved in post-Golgi vesicles by a host furin, releasing the mature small envelope protein M, and peptide pr. This cleavage is incomplete as up to 30% of viral particles still carry uncleaved prM. N-glycosylated. In terms of processing, N-glycosylated. The excreted form is glycosylated and this is required for efficient secretion of the protein from infected cells. Post-translationally, polyubiquitinated; ubiquitination is probably mediated by host TRIM23 and is prerequisite for NS5-STAT2 interaction. NS5 is not ISGylated or sumoylated. Acetylated by host KAT5. Acetylation modulates NS3 RNA-binding and unwinding activities and plays an important positive role for viral replication. In terms of processing, phosphorylated on serines residues. This phosphorylation may trigger NS5 nuclear localization.

Its subcellular location is the virion. It is found in the host nucleus. The protein localises to the host cytoplasm. It localises to the host perinuclear region. The protein resides in the secreted. Its subcellular location is the virion membrane. It is found in the host endoplasmic reticulum membrane. It carries out the reaction Selective hydrolysis of -Xaa-Xaa-|-Yaa- bonds in which each of the Xaa can be either Arg or Lys and Yaa can be either Ser or Ala.. It catalyses the reaction RNA(n) + a ribonucleoside 5'-triphosphate = RNA(n+1) + diphosphate. The catalysed reaction is a ribonucleoside 5'-triphosphate + H2O = a ribonucleoside 5'-diphosphate + phosphate + H(+). The enzyme catalyses ATP + H2O = ADP + phosphate + H(+). It carries out the reaction a 5'-end (5'-triphosphoguanosine)-ribonucleoside in mRNA + S-adenosyl-L-methionine = a 5'-end (N(7)-methyl 5'-triphosphoguanosine)-ribonucleoside in mRNA + S-adenosyl-L-homocysteine. It catalyses the reaction a 5'-end (N(7)-methyl 5'-triphosphoguanosine)-ribonucleoside in mRNA + S-adenosyl-L-methionine = a 5'-end (N(7)-methyl 5'-triphosphoguanosine)-(2'-O-methyl-ribonucleoside) in mRNA + S-adenosyl-L-homocysteine + H(+). Functionally, plays a role in virus budding by binding to the cell membrane and gathering the viral RNA into a nucleocapsid that forms the core of a mature virus particle. During virus entry, may induce genome penetration into the host cytoplasm after hemifusion induced by the surface proteins. Can migrate to the cell nucleus where it modulates host functions. In terms of biological role, inhibits RNA silencing by interfering with host Dicer. Prevents premature fusion activity of envelope proteins in trans-Golgi by binding to envelope protein E at pH6.0. After virion release in extracellular space, gets dissociated from E dimers. Its function is as follows. Acts as a chaperone for envelope protein E during intracellular virion assembly by masking and inactivating envelope protein E fusion peptide. prM is the only viral peptide matured by host furin in the trans-Golgi network probably to avoid catastrophic activation of the viral fusion activity in acidic Golgi compartment prior to virion release. prM-E cleavage is inefficient, and many virions are only partially matured. These uncleaved prM would play a role in immune evasion. Functionally, may play a role in virus budding. Exerts cytotoxic effects by activating a mitochondrial apoptotic pathway through M ectodomain. May display a viroporin activity. In terms of biological role, binds to host cell surface receptor and mediates fusion between viral and cellular membranes. Envelope protein is synthesized in the endoplasmic reticulum in the form of heterodimer with protein prM. They play a role in virion budding in the ER, and the newly formed immature particle is covered with 60 spikes composed of heterodimer between precursor prM and envelope protein E. The virion is transported to the Golgi apparatus where the low pH causes dissociation of PrM-E heterodimers and formation of E homodimers. prM-E cleavage is inefficient, and many virions are only partially matured. These uncleaved prM would play a role in immune evasion. Involved in immune evasion, pathogenesis and viral replication. Once cleaved off the polyprotein, is targeted to three destinations: the viral replication cycle, the plasma membrane and the extracellular compartment. Essential for viral replication. Required for formation of the replication complex and recruitment of other non-structural proteins to the ER-derived membrane structures. Excreted as a hexameric lipoparticle that plays a role against host immune response. Antagonizing the complement function. Binds to the host macrophages and dendritic cells. Inhibits signal transduction originating from Toll-like receptor 3 (TLR3). Its function is as follows. Component of the viral RNA replication complex that functions in virion assembly and antagonizes the host immune response. Functionally, required cofactor for the serine protease function of NS3. May have membrane-destabilizing activity and form viroporins. In terms of biological role, displays three enzymatic activities: serine protease, NTPase and RNA helicase. NS3 serine protease, in association with NS2B, performs its autocleavage and cleaves the polyprotein at dibasic sites in the cytoplasm: C-prM, NS2A-NS2B, NS2B-NS3, NS3-NS4A, NS4A-2K and NS4B-NS5. NS3 RNA helicase binds RNA and unwinds dsRNA in the 3' to 5' direction. Also plays a role in virus assembly. Regulates the ATPase activity of the NS3 helicase activity. NS4A allows NS3 helicase to conserve energy during unwinding. Its function is as follows. Functions as a signal peptide for NS4B and is required for the interferon antagonism activity of the latter. Functionally, induces the formation of ER-derived membrane vesicles where the viral replication takes place. Inhibits interferon (IFN)-induced host STAT1 phosphorylation and nuclear translocation, thereby preventing the establishment of cellular antiviral state by blocking the IFN-alpha/beta pathway. In terms of biological role, replicates the viral (+) and (-) RNA genome, and performs the capping of genomes in the cytoplasm. NS5 methylates viral RNA cap at guanine N-7 and ribose 2'-O positions. Besides its role in RNA genome replication, also prevents the establishment of cellular antiviral state by blocking the interferon-alpha/beta (IFN-alpha/beta) signaling pathway. IFN-I induces binding of NS5 to host IFN-activated transcription factor STAT2, preventing its transcriptional activity. Host TRIM23 is the E3 ligase that interacts with and polyubiquitinates NS5 to promote its binding to STAT2 and trigger IFN-I signaling inhibition. This chain is Genome polyprotein, found in Yellow fever virus (strain Ghana/Asibi/1927) (YFV).